A 159-amino-acid chain; its full sequence is MDKPRKENEEEPQSAPKTDEERPPVEHSPEKQSPEEQSSEEQSSEEEFFPEELLPELLPEMLLSEERPPQEGLSRKDLFEGRPPMEQPPCGVGKHKLEEGSFKERLARSRPQFRGDIHGRNLSNEEMIQAADELEEMKRVRNKLMIMHWKAKRSRPYPI.

Residues 1–97 form a disordered region; that stretch reads MDKPRKENEE…PPCGVGKHKL (97 aa). The segment covering 17 to 34 has biased composition (basic and acidic residues); that stretch reads KTDEERPPVEHSPEKQSP. Phosphoserine occurs at positions 28, 33, 38, 39, 43, and 44. Over residues 37–54 the composition is skewed to acidic residues; sequence QSSEEQSSEEEFFPEELL. The span at 64–80 shows a compositional bias: basic and acidic residues; the sequence is SEERPPQEGLSRKDLFE.

The protein belongs to the TFS-II family. TFA subfamily. Post-translationally, phosphorylation of Ser-38 and Ser-39 is critical for transcriptional repression. Expressed in all tissues examined. Highly expressed in heart, ovary, prostate and skeletal muscle. Moderately expressed in brain, placenta, testis and small intestine. Weakly expressed in lung, liver and spleen. Expressed in several cancer cell lines.

The protein localises to the nucleus. In terms of biological role, may be involved in transcriptional regulation. Modulates various viral and cellular promoters in a promoter context-dependent manner. For example, transcription from the FOS promoter is increased, while Rous sarcoma virus (RSV) long terminal repeat (LTR) promoter activity is repressed. Does not bind DNA directly. This chain is Transcription elongation factor A protein-like 1, found in Homo sapiens (Human).